The sequence spans 213 residues: Peptide methionine sulfoxide reductase MsrA (213 aa).

Residue Cys-53 is part of the active site.

This sequence belongs to the MsrA Met sulfoxide reductase family.

The enzyme catalyses L-methionyl-[protein] + [thioredoxin]-disulfide + H2O = L-methionyl-(S)-S-oxide-[protein] + [thioredoxin]-dithiol. It catalyses the reaction [thioredoxin]-disulfide + L-methionine + H2O = L-methionine (S)-S-oxide + [thioredoxin]-dithiol. Its function is as follows. Has an important function as a repair enzyme for proteins that have been inactivated by oxidation. Catalyzes the reversible oxidation-reduction of methionine sulfoxide in proteins to methionine. The polypeptide is Peptide methionine sulfoxide reductase MsrA (Serratia proteamaculans (strain 568)).